Consider the following 443-residue polypeptide: Protein PRRC1 (443 aa).

Disordered stretches follow at residues 1-108 (MMEE…LSHF) and 139-206 (ITRG…QDDA). Over residues 34–46 (VTSSFSSPNTSGM) the composition is skewed to polar residues. Residues 59–80 (PSLPPVQPSAPPPFVPLSPAPS) are compositionally biased toward pro residues. The span at 81 to 96 (TPLSGTSVPPSVSPSP) shows a compositional bias: low complexity. Polar residues predominate over residues 169–188 (ITQQASMTSLAQGPGTTSAI).

It belongs to the PRRC1 family. Interacts with PRKAR1A; resulting in PKA activation.

The protein localises to the golgi apparatus. It localises to the cytoplasm. Its function is as follows. May act as a regulator of the protein kinase A (PKA) during embryonic development. This is Protein PRRC1 (Prrc1) from Rattus norvegicus (Rat).